Consider the following 445-residue polypeptide: Acyl-CoA Delta-4 desaturase (445 aa).

In terms of domain architecture, Cytochrome b5 heme-binding spans 19–96 (AGVYTWEEVQ…MKPLLVGELA (78 aa)). A run of 4 helical transmembrane segments spans residues 132-152 (LFFL…LLMV), 153-173 (WHWG…ATAQ), 266-286 (YFFL…NIMM), and 307-327 (YMLC…MMFA).

The protein belongs to the fatty acid desaturase type 1 family.

It localises to the membrane. It carries out the reaction (8Z,11Z,14Z,17Z)-eicosatetraenoyl-CoA + 2 Fe(II)-[cytochrome b5] + O2 + 2 H(+) = (5Z,8Z,11Z,14Z,17Z)-eicosapentaenoyl-CoA + 2 Fe(III)-[cytochrome b5] + 2 H2O. It catalyses the reaction (7Z,10Z,13Z,16Z)-docosatetraenoyl-CoA + 2 Fe(II)-[cytochrome b5] + O2 + 2 H(+) = (4Z,7Z,10Z,13Z,16Z)-docosapentaenoyl-CoA + 2 Fe(III)-[cytochrome b5] + 2 H2O. The catalysed reaction is (7Z,10Z,13Z,16Z,19Z)-docosapentaenoyl-CoA + 2 Fe(II)-[cytochrome b5] + O2 + 2 H(+) = (4Z,7Z,10Z,13Z,16Z,19Z)-docosahexaenoyl-CoA + 2 Fe(III)-[cytochrome b5] + 2 H2O. Its pathway is lipid metabolism; polyunsaturated fatty acid biosynthesis. Fatty acid desaturase with bifunctional delta-4 and delta-5 activities. Component of a lipid metabolic pathway that catalyzes the biosynthesis of polyunsaturated fatty acids (PUFA) with preference toward n-3 substrates and Delta(4)function. This is Acyl-CoA Delta-4 desaturase from Siganus canaliculatus (White-spotted spinefoot).